Consider the following 212-residue polypeptide: MSKGFLVSLEGPEGAGKTSVLEALLPILEEKGVEVLTTREPGGVLIGEKIREVILDPSHTQMDAKTELLLYIASRRQHLVEKVLPALEAGKLVIMDRFIDSSVAYQGFGRGLDIEAIDWLNQFATDGLKPDLTLYFDIEVEEGLARIAANSDREVNRLDLEGLDLHKKVRQGYLSLLDKEGNRIVKIDASLPLEQVVETTKSVLFDGMGLAK.

Position 11–18 (Gly11–Thr18) interacts with ATP.

This sequence belongs to the thymidylate kinase family.

The catalysed reaction is dTMP + ATP = dTDP + ADP. Functionally, phosphorylation of dTMP to form dTDP in both de novo and salvage pathways of dTTP synthesis. The sequence is that of Thymidylate kinase from Streptococcus pneumoniae (strain Taiwan19F-14).